Consider the following 539-residue polypeptide: Glycerol kinase (539 aa).

Threonine 49 serves as a coordination point for ADP. Residues threonine 49, threonine 50, and serine 51 each coordinate ATP. Threonine 49 serves as a coordination point for sn-glycerol 3-phosphate. Arginine 53 is an ADP binding site. Positions 119, 120, 171, and 280 each coordinate sn-glycerol 3-phosphate. Glycerol-binding residues include arginine 119, glutamate 120, tyrosine 171, aspartate 280, and glutamine 281. The ADP site is built by threonine 302 and glycine 345. ATP-binding residues include threonine 302, glycine 345, glutamine 349, and glycine 446. Glycine 446 and asparagine 450 together coordinate ADP.

It belongs to the FGGY kinase family.

It catalyses the reaction glycerol + ATP = sn-glycerol 3-phosphate + ADP + H(+). The protein operates within polyol metabolism; glycerol degradation via glycerol kinase pathway; sn-glycerol 3-phosphate from glycerol: step 1/1. Its activity is regulated as follows. Inhibited by fructose 1,6-bisphosphate (FBP). Functionally, key enzyme in the regulation of glycerol uptake and metabolism. Catalyzes the phosphorylation of glycerol to yield sn-glycerol 3-phosphate. The polypeptide is Glycerol kinase (Rhodopirellula baltica (strain DSM 10527 / NCIMB 13988 / SH1)).